Reading from the N-terminus, the 835-residue chain is Leucine--tRNA ligase (835 aa).

The 'HIGH' region motif lies at P36–H46. Positions K602 to S606 match the 'KMSKS' region motif. ATP is bound at residue K605.

It belongs to the class-I aminoacyl-tRNA synthetase family.

It is found in the cytoplasm. It carries out the reaction tRNA(Leu) + L-leucine + ATP = L-leucyl-tRNA(Leu) + AMP + diphosphate. This Rickettsia massiliae (strain Mtu5) protein is Leucine--tRNA ligase.